The following is a 215-amino-acid chain: Urease accessory protein UreG (215 aa).

GTP is bound at residue 11–18; sequence GPVGAGKS.

Belongs to the SIMIBI class G3E GTPase family. UreG subfamily. In terms of assembly, homodimer. UreD, UreF and UreG form a complex that acts as a GTP-hydrolysis-dependent molecular chaperone, activating the urease apoprotein by helping to assemble the nickel containing metallocenter of UreC. The UreE protein probably delivers the nickel.

Its subcellular location is the cytoplasm. In terms of biological role, facilitates the functional incorporation of the urease nickel metallocenter. This process requires GTP hydrolysis, probably effectuated by UreG. The chain is Urease accessory protein UreG from Cenarchaeum symbiosum (strain A).